Consider the following 236-residue polypeptide: Phosphoribosylaminoimidazole-succinocarboxamide synthase (236 aa).

It belongs to the SAICAR synthetase family.

The catalysed reaction is 5-amino-1-(5-phospho-D-ribosyl)imidazole-4-carboxylate + L-aspartate + ATP = (2S)-2-[5-amino-1-(5-phospho-beta-D-ribosyl)imidazole-4-carboxamido]succinate + ADP + phosphate + 2 H(+). It participates in purine metabolism; IMP biosynthesis via de novo pathway; 5-amino-1-(5-phospho-D-ribosyl)imidazole-4-carboxamide from 5-amino-1-(5-phospho-D-ribosyl)imidazole-4-carboxylate: step 1/2. The sequence is that of Phosphoribosylaminoimidazole-succinocarboxamide synthase from Campylobacter jejuni subsp. jejuni serotype O:2 (strain ATCC 700819 / NCTC 11168).